Here is a 301-residue protein sequence, read N- to C-terminus: Tyrosine recombinase XerC (301 aa).

The region spanning T2–Y84 is the Core-binding (CB) domain. A Tyr recombinase domain is found at A105–D291. Active-site residues include R145, K169, H243, R246, and H269. Y278 serves as the catalytic O-(3'-phospho-DNA)-tyrosine intermediate.

The protein belongs to the 'phage' integrase family. XerC subfamily. Forms a cyclic heterotetrameric complex composed of two molecules of XerC and two molecules of XerD.

Its subcellular location is the cytoplasm. In terms of biological role, site-specific tyrosine recombinase, which acts by catalyzing the cutting and rejoining of the recombining DNA molecules. The XerC-XerD complex is essential to convert dimers of the bacterial chromosome into monomers to permit their segregation at cell division. It also contributes to the segregational stability of plasmids. The protein is Tyrosine recombinase XerC of Thermodesulfovibrio yellowstonii (strain ATCC 51303 / DSM 11347 / YP87).